The sequence spans 205 residues: Casparian strip membrane protein 4 (205 aa).

Residues 1-58 lie on the Cytoplasmic side of the membrane; the sequence is MDIEKTGSRREEEEPIVQKPKLEKGKGKAHVFAPPMNYSRIMEKHKQEKVSMAGWKRG. A helical transmembrane segment spans residues 59–79; that stretch reads VAIFDFVLRLIAAITAMAAAA. Over 80–109 the chain is Extracellular; the sequence is KMATTEETLPFFTQFLQFSADYTDLPTLSS. A helical transmembrane segment spans residues 110–130; sequence FVIVNSIVGGYLTLSLPFSIV. Residues 131 to 148 lie on the Cytoplasmic side of the membrane; sequence CILRPLAVPPRLFLILCD. A helical membrane pass occupies residues 149–169; the sequence is TAMMGLTMVAASASAAIVYLA. The Extracellular portion of the chain corresponds to 170–205; sequence HNGNSSSNWLPVCQQFGDFCKERVAPWWLPLLQRLF. N-linked (GlcNAc...) asparagine glycosylation is present at N173.

Belongs to the Casparian strip membrane proteins (CASP) family. Homodimer and heterodimers.

The protein localises to the cell membrane. Its function is as follows. Regulates membrane-cell wall junctions and localized cell wall deposition. Required for establishment of the Casparian strip membrane domain (CSD) and the subsequent formation of Casparian strips, a cell wall modification of the root endodermis that determines an apoplastic barrier between the intraorganismal apoplasm and the extraorganismal apoplasm and prevents lateral diffusion. The chain is Casparian strip membrane protein 4 from Raphanus sativus (Radish).